Consider the following 207-residue polypeptide: Dephospho-CoA kinase (207 aa).

The region spanning 12–207 (LIGITGMIGG…LYSTLLGKML (196 aa)) is the DPCK domain. ATP is bound at residue 20–25 (GGGKST).

This sequence belongs to the CoaE family.

It localises to the cytoplasm. The catalysed reaction is 3'-dephospho-CoA + ATP = ADP + CoA + H(+). It functions in the pathway cofactor biosynthesis; coenzyme A biosynthesis; CoA from (R)-pantothenate: step 5/5. In terms of biological role, catalyzes the phosphorylation of the 3'-hydroxyl group of dephosphocoenzyme A to form coenzyme A. The chain is Dephospho-CoA kinase from Leptospira interrogans serogroup Icterohaemorrhagiae serovar copenhageni (strain Fiocruz L1-130).